A 182-amino-acid chain; its full sequence is Ribosome maturation factor RimM (182 aa).

The region spanning 103-182 (EDEFYWRELF…RIEVDWDPGF (80 aa)) is the PRC barrel domain.

Belongs to the RimM family. As to quaternary structure, binds ribosomal protein uS19.

It localises to the cytoplasm. In terms of biological role, an accessory protein needed during the final step in the assembly of 30S ribosomal subunit, possibly for assembly of the head region. Essential for efficient processing of 16S rRNA. May be needed both before and after RbfA during the maturation of 16S rRNA. It has affinity for free ribosomal 30S subunits but not for 70S ribosomes. In Vibrio parahaemolyticus serotype O3:K6 (strain RIMD 2210633), this protein is Ribosome maturation factor RimM.